The following is a 115-amino-acid chain: UPF0102 protein Swol_1475 (115 aa).

Belongs to the UPF0102 family.

The protein is UPF0102 protein Swol_1475 of Syntrophomonas wolfei subsp. wolfei (strain DSM 2245B / Goettingen).